Here is a 568-residue protein sequence, read N- to C-terminus: O-fucosyltransferase 9 (568 aa).

Positions 1-19 (MHGLSRLGNGSSNGRINIP) are enriched in low complexity. The segment at 1–33 (MHGLSRLGNGSSNGRINIPSPSPPSSPRIRHTR) is disordered. The helical; Signal-anchor for type II membrane protein transmembrane segment at 65–85 (LLLAPLLYIAGMLLFMGSFGF) threads the bilayer. N-linked (GlcNAc...) asparagine glycans are attached at residues Asn125, Asn151, Asn189, and Asn243. A substrate-binding site is contributed by 336–338 (HLR). 2 N-linked (GlcNAc...) asparagine glycosylation sites follow: Asn408 and Asn409.

The protein belongs to the glycosyltransferase GT106 family.

The protein localises to the membrane. It functions in the pathway glycan metabolism. This Arabidopsis thaliana (Mouse-ear cress) protein is O-fucosyltransferase 9.